The sequence spans 652 residues: Forkhead box protein O1 (652 aa).

Disordered regions lie at residues 1-62 and 112-154; these read MAEA…ASAS and VHPA…SSRR. A Phosphothreonine; by PKB/AKT1 or PKB/AKT2 and SGK1 modification is found at threonine 24. Residues 35–62 are compositionally biased toward low complexity; that stretch reads SNSTTSSPAPSGGAAANPDAAASLASAS. Over residues 114–133 the composition is skewed to pro residues; sequence PAPPQPPPTGPLSQPPPVPP. The span at 134–146 shows a compositional bias: low complexity; it reads SAAAAAGPLAGQP. Positions 156–232 form a DNA-binding region, fork-head; that stretch reads AWGNLSYADL…VQNEGTGKSS (77 aa). 2 DNA-binding regions span residues 208-215 and 231-234; these read NSIRHNLS and SSWW. Serine 209 carries the post-translational modification Phosphoserine; by STK4/MST1. Serine 215, serine 231, and serine 232 each carry phosphoserine. 2 disordered regions span residues 231–342 and 383–410; these read SSWW…DVHS and SLTVSTQSSPGSMMQQTPCYSFAPPNTS. An N6-acetyllysine mark is found at lysine 242 and lysine 245. Position 246 is a phosphoserine; by CDK1 (serine 246). Residues arginine 248 and arginine 250 each carry the omega-N-methylarginine; by PRMT1 modification. The Nuclear localization signal signature appears at 248-250; that stretch reads RRR. Serine 253 carries the phosphoserine; by PKB/AKT1 and SGK1 modification. 3 positions are modified to N6-acetyllysine: lysine 259, lysine 262, and lysine 271. The segment covering 261–272 has biased composition (basic residues); sequence AKSRGRAAKKKA. A sufficient for interaction with NLK region spans residues 280–562; sequence GPGDSPGSQF…TPVKTPLQVP (283 aa). Serine 284 and serine 295 each carry phosphoserine. The span at 306-323 shows a compositional bias: polar residues; the sequence is NWSTFRPRTSSNASTISG. Serine 316 carries the phosphoserine; by PKB/AKT1 or PKB/AKT2 modification. Residue serine 319 is modified to Phosphoserine; by CK1 and SGK1. Residue serine 322 is modified to Phosphoserine; by CK1. Serine 326 carries the phosphoserine modification. Phosphothreonine is present on threonine 330. The required for interaction with RUNX2 stretch occupies residues 360 to 456; it reads SEISNPENME…GGLNQYNCAP (97 aa). Polar residues predominate over residues 392 to 401; that stretch reads PGSMMQQTPC. Position 420 is an N6-acetyllysine (lysine 420). Residues 459–463 carry the Required for interaction with SIRT1 motif; sequence LKELL.

As to quaternary structure, interacts with EP300 and CREBBP; the interactions acetylate FOXO1. Interacts with the 14-3-3 proteins, YWHAG and YWHAZ; the interactions require insulin-stimulated phosphorylation on Thr-24, promote nuclear exit and loss of transcriptional activity. Interacts with SKP2; the interaction ubiquitinates FOXO1 leading to its proteasomal degradation. Interacts with PMRT1; methylates FOXO1, prevents PKB/AKT1 phosphorylation and retains FOXO1 in the nucleus. Interacts (via an N-terminal domain) with FCOR; the interaction is direct, occurs in a forskolin-independent manner and prevents SIRT1 binding to FOXO1. Interacts (via the C-terminal half) with ATF4 (via its DNA-binding domain); the interaction occurs in osteoblasts, regulates glucose homeostasis via suppression of beta-cell proliferation and subsequent decrease in insulin production. Interacts with RUNX2; the interaction inhibits RUNX2 transcriptional activity and mediates the IGF1/insulin-dependent BGLAP expression in osteoblasts. Interacts with PPP2R1A; the interaction regulates the dephosphorylation of FOXO1 at Thr-24 and Ser-253 leading to its nuclear import. Binds to CDK1. Interacts with LRPPRC. Interacts with RUNX2; the interaction inhibits RUNX2 transcriptional activity and mediates the IGF1/insulin-dependent BGLAP expression in osteoblasts. Interacts with NLK. Interacts with SIRT1; the interaction results in the deacetylation of FOXO1 leading to activation of FOXO1-mediated transcription of genes involved in DNA repair and stress resistance. The interaction requires the presence of KRIT1 and is inhibited by FCOR. Interacts with SIRT2; the interaction is disrupted in response to oxidative stress or serum deprivation, leading to increased level of acetylated FOXO1, which promotes stress-induced autophagy by stimulating E1-like activating enzyme ATG7. Interacts (acetylated form) with ATG7; the interaction is increased in response to oxidative stress or serum deprivation and promotes the autophagic process leading to cell death. Interacts (acetylated form) with PPARG. Interacts with XBP1 isoform 2; this interaction is direct and leads to FOXO1 ubiquitination and degradation via the proteasome pathway. Interacts (via the Fork-head domain) with CEBPA; the interaction increases when FOXO1 is deacetylated. Interacts with WDFY2. Forms a complex with WDFY2 and AKT1. Interacts with CRY1. Interacts with PPIA/CYPA; the interaction promotes FOXO1 dephosphorylation, nuclear accumulation and transcriptional activity. Interacts with TOX4; FOXO1 is required for full induction of TOX4-dependent activity and the interaction is inhibited by insulin. Interacts (when phosphorylated on Ser-253) with STUB1/CHIP. Post-translationally, phosphorylation by NLK promotes nuclear export and inhibits the transcriptional activity. In response to growth factors, phosphorylation on Thr-24, Ser-253 and Ser-319 by PKB/AKT1 promotes nuclear export and inactivation of transactivational activity. Phosphorylation on Thr-24 is required for binding 14-3-3 proteins. Phosphorylation of Ser-253 decreases DNA-binding activity and promotes the phosphorylation of Thr-24 and Ser-316, permitting phosphorylation of Ser-319 and Ser-322, probably by CDK1, leading to nuclear exclusion and loss of function. Stress signals, such as response to oxygen or nitric oxide, attenuate the PKB/AKT1-mediated phosphorylation leading to nuclear retention. Phosphorylation of Ser-326 is independent of IGF1 and leads to reduced function. Dephosphorylated on Thr-24 and Ser-253 by PP2A in beta-cells under oxidative stress leading to nuclear retention. Phosphorylation of Ser-246 by CDK1 disrupts binding of 14-3-3 proteins leading to nuclear accumulation and has no effect on DNA-binding nor transcriptional activity. Phosphorylation by STK4/MST1 on Ser-209, upon oxidative stress, inhibits binding to 14-3-3 proteins and nuclear export. PPIA/CYPA promotes its dephosphorylation on Ser-253. Ubiquitinated by SKP2. Ubiquitinated, leading to proteasomal degradation. Ubiquitinated by STUB1/CHIP; when Ser-253 is phosphorylated. In terms of processing, methylation inhibits PKB/AKT1-mediated phosphorylation at Ser-253, promoting nuclear retention and increasing the transcriptional activity and cell death. Methylation increased by oxidative stress. Post-translationally, acetylation at Lys-259 and Lys-271 are necessary for autophagic cell death induction. Deacetylated by SIRT2 in response to oxidative stress or serum deprivation, thereby negatively regulating FOXO1-mediated autophagic cell death. Once in the nucleus, acetylated by CREBBP/EP300. Acetylation diminishes the interaction with target DNA and attenuates the transcriptional activity. It increases the phosphorylation at Ser-253, and is required for the transcriptional inhibition by FCOR. Deacetylation by SIRT1 results in reactivation of the transcriptional activity. Acetylation of FOXO1 diminishes its binding to PPARG in adipocytes. Deacetylated by SIRT2; deacetylation of FOXO1 directly increases its repressive binding to PPARG and inhibits adipocyte differentiation. Oxidative stress by hydrogen peroxide treatment appears to promote deacetylation and uncoupling of insulin-induced phosphorylation. By contrast, resveratrol acts independently of acetylation. Acetylated at Lys-420, promoting its localization to the nucleus and transcription factor activity. Deacetylation at Lys-420 by SIRT6, promotes its translocation into the cytoplasm, preventing its transcription factor activity. Deacetylation and subsequent inhibition by SIRT6 has different effects depending on cell types: it inhibits gluconeogenesis in hepatocytes, promotes glucose sensing in pancreatic beta-cells and regulates lipid catabolism in brown adipocytes. In terms of tissue distribution, expressed in liver, white and brown adipose tissues (at protein level).

The protein localises to the cytoplasm. The protein resides in the nucleus. In terms of biological role, transcription factor that is the main target of insulin signaling and regulates metabolic homeostasis in response to oxidative stress. Binds to the insulin response element (IRE) with consensus sequence 5'-TT[G/A]TTTTG-3' and the related Daf-16 family binding element (DBE) with consensus sequence 5'-TT[G/A]TTTAC-3'. Activity suppressed by insulin. Main regulator of redox balance and osteoblast numbers and controls bone mass. Orchestrates the endocrine function of the skeleton in regulating glucose metabolism. Also acts as a key regulator of chondrogenic commitment of skeletal progenitor cells in response to lipid availability: when lipids levels are low, translocates to the nucleus and promotes expression of SOX9, which induces chondrogenic commitment and suppresses fatty acid oxidation. Acts synergistically with ATF4 to suppress osteocalcin/BGLAP activity, increasing glucose levels and triggering glucose intolerance and insulin insensitivity. Also suppresses the transcriptional activity of RUNX2, an upstream activator of osteocalcin/BGLAP. Acts as an inhibitor of glucose sensing in pancreatic beta cells by acting as a transcription repressor and suppressing expression of PDX1. In hepatocytes, promotes gluconeogenesis by acting together with PPARGC1A and CEBPA to activate the expression of genes such as IGFBP1, G6PC1 and PCK1. Also promotes gluconeogenesis by directly promoting expression of PPARGC1A and G6PC1. Important regulator of cell death acting downstream of CDK1, PKB/AKT1 and STK4/MST1. Promotes neural cell death. Mediates insulin action on adipose tissue. Regulates the expression of adipogenic genes such as PPARG during preadipocyte differentiation and, adipocyte size and adipose tissue-specific gene expression in response to excessive calorie intake. Regulates the transcriptional activity of GADD45A and repair of nitric oxide-damaged DNA in beta-cells. Required for the autophagic cell death induction in response to starvation or oxidative stress in a transcription-independent manner. Mediates the function of MLIP in cardiomyocytes hypertrophy and cardiac remodeling. Positive regulator of apoptosis in cardiac smooth muscle cells as a result of its transcriptional activation of pro-apoptotic genes. Regulates endothelial cell (EC) viability and apoptosis in a PPIA/CYPA-dependent manner via transcription of CCL2 and BCL2L11 which are involved in EC chemotaxis and apoptosis. The sequence is that of Forkhead box protein O1 (Foxo1) from Mus musculus (Mouse).